A 437-amino-acid polypeptide reads, in one-letter code: Aminopeptidase G (437 aa).

Residues Cys70, His361, and Asn382 contribute to the active site.

The protein belongs to the peptidase C1 family.

It localises to the cytoplasm. The sequence is that of Aminopeptidase G (pepG) from Lactobacillus delbrueckii subsp. lactis.